Consider the following 520-residue polypeptide: Basal body-orientation factor 1 (520 aa).

Basic residues predominate over residues 1-21 (MPKKKGKGKGKGKGKGKGKKD). Positions 1–34 (MPKKKGKGKGKGKGKGKGKKDGKHDSKADRESEI) are disordered. Over residues 22-34 (GKHDSKADRESEI) the composition is skewed to basic and acidic residues. Coiled-coil stretches lie at residues 27 to 175 (KADR…REKM) and 245 to 386 (VKEA…RQEA). A disordered region spans residues 468–492 (AHPPALSASSSEKIQVSSDAGSTVE). The segment covering 469–478 (HPPALSASSS) has biased composition (low complexity). Positions 479-492 (EKIQVSSDAGSTVE) are enriched in polar residues.

This sequence belongs to the BBOF1 family.

The protein localises to the cytoplasm. The protein resides in the cytoskeleton. It is found in the cilium basal body. Functionally, basal body protein required in multiciliate cells to align and maintain cilia orientation in response to flow. May act by mediating a maturation step that stabilizes and aligns cilia orientation. Not required to respond to planar cell polarity (PCP) or flow-based orientation cues. This is Basal body-orientation factor 1 from Danio rerio (Zebrafish).